A 56-amino-acid chain; its full sequence is Small ribosomal subunit protein uS14 (56 aa).

Belongs to the universal ribosomal protein uS14 family. Component of the small ribosomal subunit (SSU). Mature yeast ribosomes consist of a small (40S) and a large (60S) subunit. The 40S small subunit contains 1 molecule of ribosomal RNA (18S rRNA) and at least 33 different proteins. The large 60S subunit contains 3 rRNA molecules (25S, 5.8S and 5S rRNA) and at least 46 different proteins.

It localises to the cytoplasm. The protein localises to the nucleus. Functionally, component of the ribosome, a large ribonucleoprotein complex responsible for the synthesis of proteins in the cell. The small ribosomal subunit (SSU) binds messenger RNAs (mRNAs) and translates the encoded message by selecting cognate aminoacyl-transfer RNA (tRNA) molecules. The large subunit (LSU) contains the ribosomal catalytic site termed the peptidyl transferase center (PTC), which catalyzes the formation of peptide bonds, thereby polymerizing the amino acids delivered by tRNAs into a polypeptide chain. The nascent polypeptides leave the ribosome through a tunnel in the LSU and interact with protein factors that function in enzymatic processing, targeting, and the membrane insertion of nascent chains at the exit of the ribosomal tunnel. This is Small ribosomal subunit protein uS14 (rps29) from Schizosaccharomyces pombe (strain 972 / ATCC 24843) (Fission yeast).